We begin with the raw amino-acid sequence, 433 residues long: N-lysine methyltransferase SMYD2 (433 aa).

An SET domain is found at 7–241; the sequence is GGLERFCSPG…PGEEVFTSYI (235 aa). 17-19 contacts S-adenosyl-L-methionine; the sequence is KGR. Positions 52, 55, 65, 68, 74, 78, 86, and 90 each coordinate Zn(2+). The MYND-type zinc finger occupies 52–90; that stretch reads CEYCFTRKEGLSKCGRCKQAFYCNVECQKEDWPMHKLEC. S-adenosyl-L-methionine-binding positions include His137, 206-207, and 258-260; these read NH and YFF. Residue Ser283 is modified to Phosphoserine.

This sequence belongs to the class V-like SAM-binding methyltransferase superfamily. In terms of assembly, interacts with RNA polymerase II and HELZ. Interacts with SIN3A and HDAC1. Interacts (via MYND-type zinc finger) with EPB41L3. Interacts (via SET domain) with p53/TP53. Interacts with RB1 and HSP90AA1.

It localises to the cytoplasm. Its subcellular location is the cytosol. The protein localises to the nucleus. It carries out the reaction L-lysyl(4)-[histone H3] + 3 S-adenosyl-L-methionine = N(6),N(6),N(6)-trimethyl-L-lysyl(4)-[histone H3] + 3 S-adenosyl-L-homocysteine + 3 H(+). It catalyses the reaction L-lysyl-[protein] + S-adenosyl-L-methionine = N(6)-methyl-L-lysyl-[protein] + S-adenosyl-L-homocysteine + H(+). Functionally, protein-lysine N-methyltransferase that methylates both histones and non-histone proteins, including p53/TP53 and RB1. Specifically trimethylates histone H3 'Lys-4' (H3K4me3) in vivo. The activity requires interaction with HSP90alpha. Shows even higher methyltransferase activity on p53/TP53. Monomethylates 'Lys-370' of p53/TP53, leading to decreased DNA-binding activity and subsequent transcriptional regulation activity of p53/TP53. Monomethylates RB1 at 'Lys-860'. The sequence is that of N-lysine methyltransferase SMYD2 (SMYD2) from Homo sapiens (Human).